The sequence spans 139 residues: Diacylglycerol acyltransferase/mycolyltransferase Ag85A (139 aa).

The active-site Nucleophile is Ser-10. Substrate-binding residues include Ser-10 and Asp-38. Residue Glu-114 is part of the active site. Residues 116–119 (FVRT) and Lys-123 contribute to the substrate site.

It belongs to the mycobacterial A85 antigen family. Homodimer.

Its subcellular location is the secreted. The protein localises to the cell wall. It is found in the cytoplasm. It catalyses the reaction an acyl-CoA + a 1,2-diacyl-sn-glycerol = a triacyl-sn-glycerol + CoA. The catalysed reaction is 2 alpha,alpha'-trehalose 6-mycolate = alpha,alpha'-trehalose 6,6'-bismycolate + alpha,alpha-trehalose. Functionally, the antigen 85 proteins (FbpA, FbpB, FbpC) are responsible for the high affinity of mycobacteria for fibronectin, a large adhesive glycoprotein, which facilitates the attachment of M.tuberculosis to murine alveolar macrophages (AMs). They also help to maintain the integrity of the cell wall by catalyzing the transfer of mycolic acids to cell wall arabinogalactan, and through the synthesis of alpha,alpha-trehalose dimycolate (TDM, cord factor). They catalyze the transfer of a mycoloyl residue from one molecule of alpha,alpha-trehalose monomycolate (TMM) to another TMM, leading to the formation of TDM. FbpA mediates triacylglycerol (TAG) formation with long-chain acyl-CoA as the acyl donor and 1,2-dipalmitoyl-sn-glycerol (1,2-dipalmitin) as the acyl acceptor. It has a preference for C26:0-CoA over C18:1-CoA. This is Diacylglycerol acyltransferase/mycolyltransferase Ag85A (fbpA) from Mycobacterium marinum.